The primary structure comprises 417 residues: MAQIKNYTLNFGPQHPAAHGVLRLVLELDGEVIQRADPHIGLLHRATEKLAKTRTWIQNIPYMDRLDYVSMMSNEHAYVMAIEKLLQVDVPLRAQYIRVMYDELTRLLNHLLWIGCHGLDVGAMAVFLYAFRDREDIFDMYEAVSGARMHAAYYRPGGVYRDLPDQMAQYDKSKIRSASAVKRLNENRSGTLLDFIEQFANGFDANVDEYCNLLTDNRIWKQRLVNIGIVTPKRALQLGFTGPMLRGSGIEWDLRKKQPYEVYDRLDFDIPVGVNGDSYDRYLVRMEEMRQSNHIIKQCVAWLKANPGPVMSTNHKVSPPKRVDMKTNMEELIHHFKLFTEGIHVPDGEAYSAVEHPKGEFGIYLISDGANKPYRMKIRAPGFVHLSSMDEMSRGHMLADAVTIIGTQDIVFGEIDR.

This sequence belongs to the complex I 49 kDa subunit family. As to quaternary structure, NDH-1 is composed of 14 different subunits. Subunits NuoB, C, D, E, F, and G constitute the peripheral sector of the complex.

It localises to the cell inner membrane. It carries out the reaction a quinone + NADH + 5 H(+)(in) = a quinol + NAD(+) + 4 H(+)(out). Its function is as follows. NDH-1 shuttles electrons from NADH, via FMN and iron-sulfur (Fe-S) centers, to quinones in the respiratory chain. The immediate electron acceptor for the enzyme in this species is believed to be ubiquinone. Couples the redox reaction to proton translocation (for every two electrons transferred, four hydrogen ions are translocated across the cytoplasmic membrane), and thus conserves the redox energy in a proton gradient. The sequence is that of NADH-quinone oxidoreductase subunit D from Polynucleobacter necessarius subsp. necessarius (strain STIR1).